A 657-amino-acid polypeptide reads, in one-letter code: Kinesin-like protein KIF22 (657 aa).

Residues 1 to 33 (MNVRAKKKPQQREMASASSGPSRSLSKGGVSRR) form a disordered region. A compositionally biased stretch (low complexity) spans 16–33 (SASSGPSRSLSKGGVSRR). Residues 38 to 360 (RVRVAVRLRP…LNFTARSKEV (323 aa)) form the Kinesin motor domain. Residue 119–126 (GPTGAGKT) participates in ATP binding. The disordered stretch occupies residues 388-415 (PSEAKKAKGPEEESTGSPESTAAPASAS). The segment covering 402–415 (TGSPESTAAPASAS) has biased composition (low complexity). Phosphoserine is present on residues S404, S419, and S444. K457 is covalently cross-linked (Glycyl lysine isopeptide (Lys-Gly) (interchain with G-Cter in SUMO2)). Residues 457 to 502 (KRERMVLIKTVEEKNLEIERLKMKQKELEAKVLAQEALDPKEKENT) adopt a coiled-coil conformation. A phosphoserine mark is found at S537, S554, and S573.

It belongs to the TRAFAC class myosin-kinesin ATPase superfamily. Kinesin family. Interacts with FAM83D and SIAH1. Post-translationally, ubiquitinated; mediated by SIAH1 and leading to its subsequent proteasomal degradation.

It is found in the nucleus. The protein localises to the cytoplasm. The protein resides in the cytoskeleton. Its function is as follows. Kinesin family member that is involved in spindle formation and the movements of chromosomes during mitosis and meiosis. Binds to microtubules and to DNA. Plays a role in congression of laterally attached chromosomes in NDC80-depleted cells. This is Kinesin-like protein KIF22 (Kif22) from Rattus norvegicus (Rat).